Here is a 129-residue protein sequence, read N- to C-terminus: Protein RfbJ (129 aa).

Belongs to the glycosyltransferase 2 family.

It participates in bacterial outer membrane biogenesis; lipopolysaccharide biosynthesis. This Shigella flexneri protein is Protein RfbJ (rfbJ).